The chain runs to 319 residues: Coproporphyrin III ferrochelatase (319 aa).

Fe(2+) is bound by residues His193 and Glu274.

Belongs to the ferrochelatase family.

The protein resides in the cytoplasm. The catalysed reaction is Fe-coproporphyrin III + 2 H(+) = coproporphyrin III + Fe(2+). Its pathway is porphyrin-containing compound metabolism; protoheme biosynthesis. Involved in coproporphyrin-dependent heme b biosynthesis. Catalyzes the insertion of ferrous iron into coproporphyrin III to form Fe-coproporphyrin III. The polypeptide is Coproporphyrin III ferrochelatase (Streptococcus mutans serotype c (strain ATCC 700610 / UA159)).